A 692-amino-acid chain; its full sequence is Threonine--tRNA ligase (692 aa).

A TGS domain is found at 2 to 59 (AEAHISITVNGEAKEVEASQTGVELFADDKNIIAVRLNGELRDLYTPLHDGDNVESVT). The catalytic stretch occupies residues 255–561 (DHRKLGQEMD…LLEHYAGAFP (307 aa)). Residues C360, H411, and H538 each contribute to the Zn(2+) site.

Belongs to the class-II aminoacyl-tRNA synthetase family. In terms of assembly, homodimer. The cofactor is Zn(2+).

Its subcellular location is the cytoplasm. It catalyses the reaction tRNA(Thr) + L-threonine + ATP = L-threonyl-tRNA(Thr) + AMP + diphosphate + H(+). Its function is as follows. Catalyzes the attachment of threonine to tRNA(Thr) in a two-step reaction: L-threonine is first activated by ATP to form Thr-AMP and then transferred to the acceptor end of tRNA(Thr). Also edits incorrectly charged L-seryl-tRNA(Thr). This Bifidobacterium animalis subsp. lactis (strain AD011) protein is Threonine--tRNA ligase.